The primary structure comprises 515 residues: Glucose-6-phosphate 1-dehydrogenase (515 aa).

An N-acetylalanine modification is found at A2. S8 carries the post-translational modification Phosphoserine. Residue T10 is modified to Phosphothreonine. NADP(+) is bound by residues 38-45 and R72; that span reads GASGDLAK. At K89 the chain carries N6-acetyllysine. NADP(+) is bound by residues Y147 and K171. D-glucose 6-phosphate-binding positions include K171, 201–205, E239, and D258; that span reads HYLGK. At K171 the chain carries N6-(2-hydroxyisobutyryl)lysine; alternate. The residue at position 171 (K171) is an N6-acetyllysine; alternate. The active-site Proton acceptor is H263. R357 is a binding site for NADP(+). 2 residues coordinate D-glucose 6-phosphate: K360 and R365. 3 residues coordinate NADP(+): K366, R370, and R393. D-glucose 6-phosphate is bound at residue Q395. Residues 401-403 and 421-423 contribute to the NADP(+) site; these read YTK and DLT. K403 carries the N6-acetyllysine modification. K432 is subject to N6-acetyllysine. R487 lines the NADP(+) pocket. The residue at position 497 (K497) is an N6-acetyllysine. Residues Y503 and W509 each coordinate NADP(+). Phosphotyrosine is present on Y503.

This sequence belongs to the glucose-6-phosphate dehydrogenase family. In terms of assembly, homotetramer; dimer of dimers. Interacts with SIRT2; the interaction is enhanced by H(2)O(2) treatment. Forms a ternary complex with ALDOB and TP53; this interaction is direct. ALDOB stabilizes the complex inhibiting G6PD activity and keeping oxidative pentose phosphate metabolism in check. Post-translationally, acetylated by ELP3 at Lys-403; acetylation inhibits its homodimerization and enzyme activity. Deacetylated by SIRT2 at Lys-403; deacetylation stimulates its enzyme activity.

It localises to the cytoplasm. The protein resides in the cytosol. Its subcellular location is the membrane. The enzyme catalyses D-glucose 6-phosphate + NADP(+) = 6-phospho-D-glucono-1,5-lactone + NADPH + H(+). The protein operates within carbohydrate degradation; pentose phosphate pathway; D-ribulose 5-phosphate from D-glucose 6-phosphate (oxidative stage): step 1/3. Functionally, cytosolic glucose-6-phosphate dehydrogenase that catalyzes the first and rate-limiting step of the oxidative branch within the pentose phosphate pathway/shunt, an alternative route to glycolysis for the dissimilation of carbohydrates and a major source of reducing power and metabolic intermediates for fatty acid and nucleic acid biosynthetic processes. This chain is Glucose-6-phosphate 1-dehydrogenase (G6pdx), found in Rattus norvegicus (Rat).